The following is a 190-amino-acid chain: Orotate phosphoribosyltransferase (190 aa).

Residue 114 to 122 (EDVVTTGGS) coordinates 5-phospho-alpha-D-ribose 1-diphosphate. Residues Thr-118 and Arg-146 each contribute to the orotate site.

The protein belongs to the purine/pyrimidine phosphoribosyltransferase family. PyrE subfamily. As to quaternary structure, homodimer. Mg(2+) serves as cofactor.

The enzyme catalyses orotidine 5'-phosphate + diphosphate = orotate + 5-phospho-alpha-D-ribose 1-diphosphate. The protein operates within pyrimidine metabolism; UMP biosynthesis via de novo pathway; UMP from orotate: step 1/2. Functionally, catalyzes the transfer of a ribosyl phosphate group from 5-phosphoribose 1-diphosphate to orotate, leading to the formation of orotidine monophosphate (OMP). This is Orotate phosphoribosyltransferase from Caldanaerobacter subterraneus subsp. tengcongensis (strain DSM 15242 / JCM 11007 / NBRC 100824 / MB4) (Thermoanaerobacter tengcongensis).